The sequence spans 847 residues: Glucans biosynthesis glucosyltransferase H (847 aa).

Residues Met1–Arg138 lie on the Cytoplasmic side of the membrane. Residues Tyr139–Met156 form a helical membrane-spanning segment. Over Lys157–Gly193 the chain is Periplasmic. Residues Ile194–Phe216 traverse the membrane as a helical segment. At Leu217–Arg511 the chain is on the cytoplasmic side. Residues Ala512 to Ser534 traverse the membrane as a helical segment. The Periplasmic portion of the chain corresponds to Thr535–Ala567. The chain crosses the membrane as a helical span at residues Ile568–Trp590. The Cytoplasmic portion of the chain corresponds to Cys591 to Arg602. Residues Val603–His625 form a helical membrane-spanning segment. Topologically, residues Thr626–Arg679 are periplasmic. The chain crosses the membrane as a helical span at residues Phe680 to Ser702. Topologically, residues Arg703–Arg847 are cytoplasmic.

It belongs to the glycosyltransferase 2 family. OpgH subfamily.

Its subcellular location is the cell inner membrane. Its pathway is glycan metabolism; osmoregulated periplasmic glucan (OPG) biosynthesis. Involved in the biosynthesis of osmoregulated periplasmic glucans (OPGs). This chain is Glucans biosynthesis glucosyltransferase H, found in Salmonella typhimurium (strain LT2 / SGSC1412 / ATCC 700720).